Here is a 372-residue protein sequence, read N- to C-terminus: L-selectin (372 aa).

The signal sequence occupies residues 1–28 (MIFPRKCQSTQRDLWNIFKLWGWTMLCC). A propeptide spanning residues 29-38 (DFLAHHGTDC) is cleaved from the precursor. The Extracellular portion of the chain corresponds to 39 to 332 (WTYHYSENPM…FSMIKEGDYN (294 aa)). In terms of domain architecture, C-type lectin spans 55–155 (RFCRENYTDL…ACHKPKAALC (101 aa)). Cystine bridges form between cysteine 57–cysteine 155, cysteine 128–cysteine 147, cysteine 128–cysteine 160, cysteine 160–cysteine 171, cysteine 165–cysteine 180, cysteine 182–cysteine 191, cysteine 197–cysteine 241, cysteine 227–cysteine 254, cysteine 259–cysteine 303, and cysteine 289–cysteine 316. Asparagine 60 and asparagine 104 each carry an N-linked (GlcNAc...) asparagine glycan. 5 residues coordinate Ca(2+): glutamate 118, asparagine 120, glutamate 126, asparagine 143, and aspartate 144. The 37-residue stretch at 156 to 192 (YTASCQPWSCSGHGECVEIINNYTCNCDVGYYGPQCQ) folds into the EGF-like domain. Asparagine 177 carries N-linked (GlcNAc...) asparagine glycosylation. Sushi domains lie at 195-256 (IQCE…TCQV) and 257-318 (IQCE…ICQK). Asparagine 226, asparagine 232, asparagine 246, and asparagine 271 each carry an N-linked (GlcNAc...) asparagine glycan. A helical transmembrane segment spans residues 333-355 (PLFIPVAVIVTAFSGLAFIIWLA). At 356–372 (RRLKKGKKSKKSMDDPY) the chain is on the cytoplasmic side.

The protein belongs to the selectin/LECAM family. Interaction with SELPLG/PSGL1 and PODXL2 is required for promoting recruitment and rolling of leukocytes. This interaction is dependent on the sialyl Lewis X glycan modification of SELPLG and PODXL2, and tyrosine sulfation modifications of SELPLG. Sulfation on 'Tyr-51' of SELPLG is important for L-selectin binding. Post-translationally, N-glycosylated.

Its subcellular location is the cell membrane. In terms of biological role, calcium-dependent lectin that mediates cell adhesion by binding to glycoproteins on neighboring cells. Mediates the adherence of lymphocytes to endothelial cells of high endothelial venules in peripheral lymph nodes. Promotes initial tethering and rolling of leukocytes in endothelia. The protein is L-selectin (SELL) of Papio hamadryas (Hamadryas baboon).